The primary structure comprises 116 residues: Large ribosomal subunit protein bL19 (116 aa).

Belongs to the bacterial ribosomal protein bL19 family.

Its function is as follows. This protein is located at the 30S-50S ribosomal subunit interface and may play a role in the structure and function of the aminoacyl-tRNA binding site. The sequence is that of Large ribosomal subunit protein bL19 from Staphylococcus carnosus (strain TM300).